The following is a 206-amino-acid chain: Thymidylate kinase (206 aa).

16 to 23 (GIDGTGKS) serves as a coordination point for ATP.

Belongs to the thymidylate kinase family.

It catalyses the reaction dTMP + ATP = dTDP + ADP. Functionally, phosphorylation of dTMP to form dTDP in both de novo and salvage pathways of dTTP synthesis. The polypeptide is Thymidylate kinase (Akkermansia muciniphila (strain ATCC BAA-835 / DSM 22959 / JCM 33894 / BCRC 81048 / CCUG 64013 / CIP 107961 / Muc)).